The primary structure comprises 252 residues: Phosphoribosyl-ATP pyrophosphatase (252 aa).

Belongs to the PRA-PH family.

Its subcellular location is the cytoplasm. It carries out the reaction 1-(5-phospho-beta-D-ribosyl)-ATP + H2O = 1-(5-phospho-beta-D-ribosyl)-5'-AMP + diphosphate + H(+). It participates in amino-acid biosynthesis; L-histidine biosynthesis; L-histidine from 5-phospho-alpha-D-ribose 1-diphosphate: step 2/9. This is Phosphoribosyl-ATP pyrophosphatase from Magnetococcus marinus (strain ATCC BAA-1437 / JCM 17883 / MC-1).